The following is an 813-amino-acid chain: DNA gyrase subunit A (813 aa).

Residues leucine 38–phenylalanine 504 form the Topo IIA-type catalytic domain. The O-(5'-phospho-DNA)-tyrosine intermediate role is filled by tyrosine 126. Residues glutamine 531 to glycine 537 carry the GyrA-box motif.

This sequence belongs to the type II topoisomerase GyrA/ParC subunit family. As to quaternary structure, heterotetramer, composed of two GyrA and two GyrB chains. In the heterotetramer, GyrA contains the active site tyrosine that forms a transient covalent intermediate with DNA, while GyrB binds cofactors and catalyzes ATP hydrolysis.

It is found in the cytoplasm. The catalysed reaction is ATP-dependent breakage, passage and rejoining of double-stranded DNA.. A type II topoisomerase that negatively supercoils closed circular double-stranded (ds) DNA in an ATP-dependent manner to modulate DNA topology and maintain chromosomes in an underwound state. Negative supercoiling favors strand separation, and DNA replication, transcription, recombination and repair, all of which involve strand separation. Also able to catalyze the interconversion of other topological isomers of dsDNA rings, including catenanes and knotted rings. Type II topoisomerases break and join 2 DNA strands simultaneously in an ATP-dependent manner. The polypeptide is DNA gyrase subunit A (Treponema pallidum (strain Nichols)).